A 102-amino-acid chain; its full sequence is Scorpine-like-2 (102 aa).

A signal peptide spans 1–19; that stretch reads MQTQCTVLQLLVLVALCSC. One can recognise a BetaSPN-type CS-alpha/beta domain in the interval 63 to 102; the sequence is QQLCLIVDTVQWCNKSCLAAENKEGYCHGTKCKCGIKVSY. 3 disulfide bridges follow: Cys66/Cys89, Cys75/Cys94, and Cys79/Cys96.

The protein belongs to the long chain scorpion toxin family. Class 3 subfamily. In terms of tissue distribution, expressed by the venom gland.

Its subcellular location is the secreted. Inhibits voltage-gated potassium channels. The protein is Scorpine-like-2 of Urodacus yaschenkoi (Inland robust scorpion).